The chain runs to 208 residues: Large ribosomal subunit protein uL3 (208 aa).

The interval 116-146 is disordered; it reads GFQGAIKRHGQSRGPMAHGSRYHRRPGSMGP.

It belongs to the universal ribosomal protein uL3 family. Part of the 50S ribosomal subunit. Forms a cluster with proteins L14 and L19.

One of the primary rRNA binding proteins, it binds directly near the 3'-end of the 23S rRNA, where it nucleates assembly of the 50S subunit. This is Large ribosomal subunit protein uL3 from Streptococcus mutans serotype c (strain ATCC 700610 / UA159).